Consider the following 413-residue polypeptide: Multifunctional CCA protein (413 aa).

Gly-8 and Arg-11 together coordinate ATP. Residues Gly-8 and Arg-11 each coordinate CTP. The Mg(2+) site is built by Asp-21 and Asp-23. 3 residues coordinate ATP: Arg-91, Arg-141, and Arg-144. 3 residues coordinate CTP: Arg-91, Arg-141, and Arg-144. Residues Thr-230–Leu-331 enclose the HD domain.

The protein belongs to the tRNA nucleotidyltransferase/poly(A) polymerase family. Bacterial CCA-adding enzyme type 1 subfamily. As to quaternary structure, monomer. Can also form homodimers and oligomers. Mg(2+) is required as a cofactor. The cofactor is Ni(2+).

It carries out the reaction a tRNA precursor + 2 CTP + ATP = a tRNA with a 3' CCA end + 3 diphosphate. The catalysed reaction is a tRNA with a 3' CCA end + 2 CTP + ATP = a tRNA with a 3' CCACCA end + 3 diphosphate. Functionally, catalyzes the addition and repair of the essential 3'-terminal CCA sequence in tRNAs without using a nucleic acid template. Adds these three nucleotides in the order of C, C, and A to the tRNA nucleotide-73, using CTP and ATP as substrates and producing inorganic pyrophosphate. tRNA 3'-terminal CCA addition is required both for tRNA processing and repair. Also involved in tRNA surveillance by mediating tandem CCA addition to generate a CCACCA at the 3' terminus of unstable tRNAs. While stable tRNAs receive only 3'-terminal CCA, unstable tRNAs are marked with CCACCA and rapidly degraded. In Verminephrobacter eiseniae (strain EF01-2), this protein is Multifunctional CCA protein.